The chain runs to 291 residues: Elongation factor Ts (291 aa).

Residues 79–82 (TDFV) form an involved in Mg(2+) ion dislocation from EF-Tu region.

This sequence belongs to the EF-Ts family.

The protein resides in the cytoplasm. In terms of biological role, associates with the EF-Tu.GDP complex and induces the exchange of GDP to GTP. It remains bound to the aminoacyl-tRNA.EF-Tu.GTP complex up to the GTP hydrolysis stage on the ribosome. In Ruegeria pomeroyi (strain ATCC 700808 / DSM 15171 / DSS-3) (Silicibacter pomeroyi), this protein is Elongation factor Ts.